We begin with the raw amino-acid sequence, 42 residues long: Photosystem II reaction center protein J (42 aa).

Residues 10–30 (IPLWLVGTVVGTLALGLVALF) traverse the membrane as a helical segment.

This sequence belongs to the PsbJ family. PSII is composed of 1 copy each of membrane proteins PsbA, PsbB, PsbC, PsbD, PsbE, PsbF, PsbH, PsbI, PsbJ, PsbK, PsbL, PsbM, PsbT, PsbX, PsbY, PsbZ, Psb30/Ycf12, at least 3 peripheral proteins of the oxygen-evolving complex and a large number of cofactors. It forms dimeric complexes.

It localises to the plastid. The protein resides in the chloroplast thylakoid membrane. One of the components of the core complex of photosystem II (PSII). PSII is a light-driven water:plastoquinone oxidoreductase that uses light energy to abstract electrons from H(2)O, generating O(2) and a proton gradient subsequently used for ATP formation. It consists of a core antenna complex that captures photons, and an electron transfer chain that converts photonic excitation into a charge separation. The chain is Photosystem II reaction center protein J from Oltmannsiellopsis viridis (Marine flagellate).